The chain runs to 466 residues: Uronate isomerase (466 aa).

Belongs to the metallo-dependent hydrolases superfamily. Uronate isomerase family.

The catalysed reaction is D-glucuronate = D-fructuronate. It carries out the reaction aldehydo-D-galacturonate = keto-D-tagaturonate. It participates in carbohydrate metabolism; pentose and glucuronate interconversion. The protein is Uronate isomerase of Lachnoclostridium phytofermentans (strain ATCC 700394 / DSM 18823 / ISDg) (Clostridium phytofermentans).